A 380-amino-acid chain; its full sequence is DNA replication and repair protein RecF (380 aa).

Residue 30-37 participates in ATP binding; sequence GENAQGKT.

Belongs to the RecF family.

It localises to the cytoplasm. Functionally, the RecF protein is involved in DNA metabolism; it is required for DNA replication and normal SOS inducibility. RecF binds preferentially to single-stranded, linear DNA. It also seems to bind ATP. This chain is DNA replication and repair protein RecF, found in Synechococcus sp. (strain JA-2-3B'a(2-13)) (Cyanobacteria bacterium Yellowstone B-Prime).